The chain runs to 86 residues: Anti-adapter protein IraP (86 aa).

Residues 1–38 (MKNLIAELLVKLAQKEEEAKELTVQVEALEIVVTALLR) are a coiled coil.

This sequence belongs to the IraP family. As to quaternary structure, interacts with RssB.

The protein localises to the cytoplasm. In terms of biological role, inhibits RpoS proteolysis by regulating RssB activity, thereby increasing the stability of the sigma stress factor RpoS especially during phosphate starvation, but also in stationary phase and during nitrogen starvation. Its effect on RpoS stability is due to its interaction with RssB, which probably blocks the interaction of RssB with RpoS, and the consequent delivery of the RssB-RpoS complex to the ClpXP protein degradation pathway. The protein is Anti-adapter protein IraP of Klebsiella pneumoniae (strain 342).